The primary structure comprises 322 residues: Fructose-1,6-bisphosphatase class 1 (322 aa).

Glu84, Asp103, Leu105, and Asp106 together coordinate Mg(2+). Substrate is bound by residues 106–109 (DGSS), Asn198, and Lys264. Position 270 (Glu270) interacts with Mg(2+).

It belongs to the FBPase class 1 family. As to quaternary structure, homotetramer. Mg(2+) serves as cofactor.

The protein resides in the cytoplasm. The enzyme catalyses beta-D-fructose 1,6-bisphosphate + H2O = beta-D-fructose 6-phosphate + phosphate. The protein operates within carbohydrate biosynthesis; gluconeogenesis. This chain is Fructose-1,6-bisphosphatase class 1, found in Saccharophagus degradans (strain 2-40 / ATCC 43961 / DSM 17024).